A 330-amino-acid chain; its full sequence is D-alanine--D-alanine ligase (330 aa).

An ATP-grasp domain is found at 122 to 323 (NRFLSGFGIR…MKEVLCTIIR (202 aa)). Position 151–206 (151–206 (IARMGLPLFVKPNVGGSSIATTKVVEAAQLLPAIEQAFSEGEEVMIERLICGTEVT)) interacts with ATP. The Mg(2+) site is built by aspartate 277, glutamate 290, and asparagine 292.

This sequence belongs to the D-alanine--D-alanine ligase family. The cofactor is Mg(2+). Requires Mn(2+) as cofactor.

It is found in the cytoplasm. It catalyses the reaction 2 D-alanine + ATP = D-alanyl-D-alanine + ADP + phosphate + H(+). Its pathway is cell wall biogenesis; peptidoglycan biosynthesis. In terms of biological role, cell wall formation. This is D-alanine--D-alanine ligase from Porphyromonas gingivalis (strain ATCC BAA-308 / W83).